The primary structure comprises 385 residues: 8-amino-7-oxononanoate synthase (385 aa).

Substrate is bound at residue Arg-23. 110-111 (GF) provides a ligand contact to pyridoxal 5'-phosphate. His-135 provides a ligand contact to substrate. Pyridoxal 5'-phosphate is bound by residues Ser-180, His-208, and Thr-234. Lys-237 bears the N6-(pyridoxal phosphate)lysine mark. Thr-350 contacts substrate.

It belongs to the class-II pyridoxal-phosphate-dependent aminotransferase family. BioF subfamily. Homodimer. Pyridoxal 5'-phosphate serves as cofactor.

The enzyme catalyses 6-carboxyhexanoyl-[ACP] + L-alanine + H(+) = (8S)-8-amino-7-oxononanoate + holo-[ACP] + CO2. It functions in the pathway cofactor biosynthesis; biotin biosynthesis. In terms of biological role, catalyzes the decarboxylative condensation of pimeloyl-[acyl-carrier protein] and L-alanine to produce 8-amino-7-oxononanoate (AON), [acyl-carrier protein], and carbon dioxide. This Vibrio vulnificus (strain CMCP6) protein is 8-amino-7-oxononanoate synthase.